A 382-amino-acid chain; its full sequence is uncharacterized protein (382 aa).

11 helical membrane-spanning segments follow: residues 8–28 (VLLLLCGLLLFTISIAVLNTL), 41–61 (WQVGMVSSSYFTGNLVGTLIA), 73–93 (SYHCSCILFALATCGLMLTVD), 94–114 (FWSWLGWRFLAGIACALIWVI), 133–153 (AAYMMVYYLGTVIGQLLLGIV), 157–177 (LLSVIPWVGALVITAMLPLLF), 208–228 (GCIISGVLLGSLYGLLPLYLS), 235–255 (ASVGGWMALLVSSGIIGQWPM), 274–294 (VVILGSVAILGNYAMAPALFI), 325–345 (ALLMSYTLGSLAGPTMTSLLM), and 349–369 (SDNLLFIMIAGVAFVYLMMLL).

The protein belongs to the major facilitator superfamily. YcaD (TC 2.A.1.26) family.

It localises to the cell inner membrane. This is an uncharacterized protein from Yersinia pseudotuberculosis serotype IB (strain PB1/+).